We begin with the raw amino-acid sequence, 962 residues long: Putative RNA Helicase B962L (962 aa).

The region spanning Ile43–Leu229 is the Helicase ATP-binding domain. Ser56–Ser63 serves as a coordination point for ATP. Positions Asp167–His170 match the DEAH box motif. Residues Ala253 to Phe459 enclose the Helicase C-terminal domain. The chain crosses the membrane as a helical span at residues Gly521 to Ala541.

It belongs to the DEAD box helicase family. DEAH subfamily.

It localises to the host membrane. It is found in the virion. The enzyme catalyses ATP + H2O = ADP + phosphate + H(+). The protein is Putative RNA Helicase B962L of African swine fever virus (isolate Tick/South Africa/Pretoriuskop Pr4/1996) (ASFV).